A 622-amino-acid chain; its full sequence is ABC transporter permease protein YxdM (622 aa).

A run of 10 helical transmembrane segments spans residues 20 to 40 (AFFL…MFLF), 56 to 76 (GLTA…LYSV), 118 to 138 (AGII…AYIL), 154 to 174 (ITAC…ILFV), 195 to 215 (PSVL…GMVL), 219 to 239 (VHGA…YFFF), 279 to 299 (LFFI…VLAM), 498 to 518 (TVQL…VFFV), 558 to 578 (IQLA…TLFA), and 590 to 610 (VAGP…LFFL).

It belongs to the ABC-4 integral membrane protein family. The complex is composed of two ATP-binding proteins (YxdL) and two transmembrane proteins (YxdM).

It localises to the cell membrane. In terms of biological role, part of the ABC transporter complex YxdLM which could be involved in peptide resistance. The sequence is that of ABC transporter permease protein YxdM (yxdM) from Bacillus subtilis (strain 168).